A 910-amino-acid chain; its full sequence is Coatomer subunit beta'-2 (910 aa).

9 WD repeats span residues 13–52 (QRSE…MVKS), 55–94 (VTEL…KVKV), 97–136 (AHTD…MCTQ), 140–180 (GHSH…PNFT), 183–224 (GHSK…CVQT), 227–266 (GHAH…LENT), 269–309 (YGLE…ASMD), 351–393 (TCDL…GSAL), and 461–501 (RIDV…SHLD). Residues 882 to 910 (ADGSTDGAVLVNGNDTEEQWGTNNEESSA) are disordered. Residues 900–910 (QWGTNNEESSA) show a composition bias toward polar residues.

The protein belongs to the WD repeat COPB2 family. In terms of assembly, oligomeric complex that consists of at least the alpha, beta, beta', gamma, delta, epsilon and zeta subunits.

The protein localises to the cytoplasm. Its subcellular location is the golgi apparatus membrane. It localises to the cytoplasmic vesicle. It is found in the COPI-coated vesicle membrane. Its function is as follows. The coatomer is a cytosolic protein complex that binds to dilysine motifs and reversibly associates with Golgi non-clathrin-coated vesicles, which further mediate biosynthetic protein transport from the ER, via the Golgi up to the trans Golgi network. Coatomer complex is required for budding from Golgi membranes, and is essential for the retrograde Golgi-to-ER transport of dilysine-tagged proteins. The chain is Coatomer subunit beta'-2 from Oryza sativa subsp. japonica (Rice).